The primary structure comprises 334 residues: MAFNLRNRNFLKLLDFTPKEIHFLLDLSAELKRAKYAGTEQKTLQGKNIALIFEKSSTRTRCAFEVAAFDQGAQVSYIGPSGSQIGHKESMKDTARVLGRMYDGIQYRGFGQEIVEVLGQYAGVPVWNGLTDEFHPTQILADLLTMQEYGRSKQLHEMKFAYLGDARNNMGNSLMVGAAKMGMDIRLVAPKAYWPNDALVATCQEIAKQTGAKITLTEEVQEGVKGCDFLYTDVWVSMGEAADAWDERVALMKPYQVNMDVIKATGNPQVKFMHCLPAFHDDQTKVGQEIAAKYGMQGLEVTEEVFESEYSIVFDEAENRLHTIKAVMVATLGQ.

Residues 57–60 (STRT), Gln-84, Arg-108, and 135–138 (HPTQ) contribute to the carbamoyl phosphate site. L-ornithine is bound by residues Asn-169, Asp-233, and 237–238 (SM). Carbamoyl phosphate is bound by residues 275 to 276 (CL) and Arg-320.

It belongs to the aspartate/ornithine carbamoyltransferase superfamily. OTCase family.

The protein localises to the cytoplasm. The catalysed reaction is carbamoyl phosphate + L-ornithine = L-citrulline + phosphate + H(+). Its pathway is amino-acid biosynthesis; L-arginine biosynthesis; L-arginine from L-ornithine and carbamoyl phosphate: step 1/3. Reversibly catalyzes the transfer of the carbamoyl group from carbamoyl phosphate (CP) to the N(epsilon) atom of ornithine (ORN) to produce L-citrulline. The chain is Ornithine carbamoyltransferase from Vibrio cholerae serotype O1 (strain ATCC 39315 / El Tor Inaba N16961).